A 932-amino-acid chain; its full sequence is Protocadherin gamma-A3 (932 aa).

The first 29 residues, 1 to 29 (MTNCLSFRNGRGLALLCALLGTLCETGSG), serve as a signal peptide directing secretion. Cadherin domains lie at 30-133 (QIRY…APNF), 134-242 (PTEE…PPMF), 243-347 (TQPE…APEI), 348-452 (TITS…PPTF), 453-562 (PHLS…APEI), and 570-682 (DGST…EPSA). Residues 30 to 692 (QIRYSVSEEL…KPNDSDLTLY (663 aa)) lie on the Extracellular side of the membrane. N-linked (GlcNAc...) asparagine glycans are attached at residues N265, N419, and N545. N685 carries an N-linked (GlcNAc...) asparagine glycan. A helical transmembrane segment spans residues 693-713 (LVVAVAAVSCVFLAFVIVLLA). Residues 714–932 (LRLRRWHKSR…KKKSGKKEKK (219 aa)) lie on the Cytoplasmic side of the membrane. Disordered stretches follow at residues 805–841 (NLLQ…WPNN) and 902–932 (ATLT…KEKK). The span at 922 to 932 (NKKKSGKKEKK) shows a compositional bias: basic residues.

The protein localises to the cell membrane. Potential calcium-dependent cell-adhesion protein. May be involved in the establishment and maintenance of specific neuronal connections in the brain. This Homo sapiens (Human) protein is Protocadherin gamma-A3 (PCDHGA3).